A 542-amino-acid chain; its full sequence is Prolyl 3-hydroxylase OGFOD1 (542 aa).

Residues 134–239 (DLESTIDMSC…RLSISGWFHG (106 aa)) enclose the Fe2OG dioxygenase domain. Fe cation is bound by residues H155 and D157. Y169 contributes to the 2-oxoglutarate binding site. H218 contacts Fe cation. Residue R230 participates in 2-oxoglutarate binding. Residues 371–435 (SEDEPEDKKE…AKKESSVPTC (65 aa)) form a disordered region. Positions 395 to 417 (SHSSSEPENSWAATSDSSLQSEG) are enriched in polar residues.

This sequence belongs to the TPA1 family. In terms of assembly, monomer. The cofactor is Fe(2+). L-ascorbate is required as a cofactor.

Its subcellular location is the cytoplasm. The protein localises to the nucleus. It carries out the reaction [ribosomal protein uS12]-L-proline + 2-oxoglutarate + O2 = [ribosomal protein uS12]-(3S)-3-hydroxy-L-proline + succinate + CO2. Prolyl 3-hydroxylase that catalyzes 3-hydroxylation of 'Pro-62' of small ribosomal subunit uS12 (RPS23), thereby regulating protein translation termination efficiency. Involved in stress granule formation. This chain is Prolyl 3-hydroxylase OGFOD1 (OGFOD1), found in Bos taurus (Bovine).